A 209-amino-acid polypeptide reads, in one-letter code: Large ribosomal subunit protein uL3 (209 aa).

A disordered region spans residues 141–163; the sequence is RAVGSMGASSDPSRTFKNKRMPG.

Belongs to the universal ribosomal protein uL3 family. In terms of assembly, part of the 50S ribosomal subunit. Forms a cluster with proteins L14 and L19.

Functionally, one of the primary rRNA binding proteins, it binds directly near the 3'-end of the 23S rRNA, where it nucleates assembly of the 50S subunit. This is Large ribosomal subunit protein uL3 from Clostridium botulinum (strain ATCC 19397 / Type A).